Reading from the N-terminus, the 431-residue chain is Tol-Pal system protein TolB (431 aa).

The signal sequence occupies residues 1 to 26 (MSLMTKLGFRALVASCLITAGSAANA). The disordered stretch occupies residues 411–431 (PQILSVQGGSVREPSWGPFMQ).

It belongs to the TolB family. As to quaternary structure, the Tol-Pal system is composed of five core proteins: the inner membrane proteins TolA, TolQ and TolR, the periplasmic protein TolB and the outer membrane protein Pal. They form a network linking the inner and outer membranes and the peptidoglycan layer.

It localises to the periplasm. Its function is as follows. Part of the Tol-Pal system, which plays a role in outer membrane invagination during cell division and is important for maintaining outer membrane integrity. The chain is Tol-Pal system protein TolB from Burkholderia lata (strain ATCC 17760 / DSM 23089 / LMG 22485 / NCIMB 9086 / R18194 / 383).